A 611-amino-acid polypeptide reads, in one-letter code: Serine/arginine repetitive matrix protein 4 (611 aa).

Disordered stretches follow at residues 38–248 (ARKP…PLQM) and 263–611 (SAAD…STRR). Composition is skewed to basic residues over residues 107–123 (RGKK…RRRS) and 131–189 (VKKK…HRCP). Low complexity predominate over residues 190–202 (SRSQSSESRPSSC). Basic and acidic residues predominate over residues 203–216 (ESRHRGRSPEEGQK). The segment covering 217-226 (SRRRHSRRCS) has biased composition (basic residues). Over residues 270-290 (KTASPLTTSRGRSQEYDSGND) the composition is skewed to polar residues. Residues 291-301 (TSSPPSTQTSS) are compositionally biased toward low complexity. Positions 322–341 (LNSGNTSDSGNSFTTSSPQN) are enriched in polar residues. 2 stretches are compositionally biased toward low complexity: residues 390 to 422 (SRSS…SRST) and 430 to 461 (SRSP…SRYS). A compositionally biased stretch (basic and acidic residues) spans 462 to 482 (PSRERDPKYSEKDSQQRERER). Basic residues predominate over residues 483-498 (ARRRRRSYSPMRKRRR). Residues 499-508 (DSPSHLEARR) show a composition bias toward basic and acidic residues. The span at 522–549 (PSPSSSGSLSSTSSWYSSSSSRSASRSY) shows a compositional bias: low complexity. Over residues 550 to 564 (SRSRSRSRSRRRSRT) the composition is skewed to basic residues. The segment covering 565–580 (RTSSSSSSRSPSPGSR) has biased composition (low complexity). A compositionally biased stretch (basic residues) spans 581-595 (SRSRSRSRSRSRSRS). Over residues 596–611 (QSRSYSSADSYSSTRR) the composition is skewed to low complexity.

This sequence belongs to the nSR100 family. In terms of processing, phosphorylated. As to expression, specifically expressed in neuronal cells (at protein level). Expressed in the cerebellum.

The protein resides in the nucleus. Its function is as follows. Splicing factor specifically required for neural cell differentiation. Acts in conjunction with nPTB/PTBP2 by binding directly to its regulated target transcripts and promotes neural-specific exon inclusion in many genes that function in neural cell differentiation. Required to promote the inclusion of neural-specific exon 10 in nPTB/PTBP2, leading to increased expression of neural-specific nPTB/PTBP2. Also promotes the inclusion of exon 16 in DAAM1 in neuron extracts. Promotes alternative splicing of REST transcripts to produce REST isoform 3 (REST4) with greatly reduced repressive activity, thereby activating expression of REST targets in neural cells. Plays an important role during embryonic development as well as in the proper functioning of the adult nervous system. Regulates alternative splicing events in genes with important neuronal functions. This chain is Serine/arginine repetitive matrix protein 4 (SRRM4), found in Homo sapiens (Human).